The primary structure comprises 379 residues: Chaperone protein DnaJ (379 aa).

The J domain occupies glutamate 5–glycine 69. Residues glycine 141–alanine 223 form a CR-type zinc finger. Zn(2+) contacts are provided by cysteine 154, cysteine 157, cysteine 171, cysteine 174, cysteine 197, cysteine 200, cysteine 211, and cysteine 214. CXXCXGXG motif repeat units lie at residues cysteine 154 to glycine 161, cysteine 171 to glycine 178, cysteine 197 to glycine 204, and cysteine 211 to glycine 218.

It belongs to the DnaJ family. Homodimer. Requires Zn(2+) as cofactor.

It is found in the cytoplasm. Functionally, participates actively in the response to hyperosmotic and heat shock by preventing the aggregation of stress-denatured proteins and by disaggregating proteins, also in an autonomous, DnaK-independent fashion. Unfolded proteins bind initially to DnaJ; upon interaction with the DnaJ-bound protein, DnaK hydrolyzes its bound ATP, resulting in the formation of a stable complex. GrpE releases ADP from DnaK; ATP binding to DnaK triggers the release of the substrate protein, thus completing the reaction cycle. Several rounds of ATP-dependent interactions between DnaJ, DnaK and GrpE are required for fully efficient folding. Also involved, together with DnaK and GrpE, in the DNA replication of plasmids through activation of initiation proteins. The polypeptide is Chaperone protein DnaJ (Lactococcus lactis subsp. cremoris (strain SK11)).